Reading from the N-terminus, the 863-residue chain is Leucine--tRNA ligase (863 aa).

Positions 40–51 match the 'HIGH' region motif; the sequence is PYPSGAGLHVGH. Positions 635 to 639 match the 'KMSKS' region motif; sequence KMSKS. Lys-638 lines the ATP pocket.

The protein belongs to the class-I aminoacyl-tRNA synthetase family.

It is found in the cytoplasm. The enzyme catalyses tRNA(Leu) + L-leucine + ATP = L-leucyl-tRNA(Leu) + AMP + diphosphate. The polypeptide is Leucine--tRNA ligase (Leptospira interrogans serogroup Icterohaemorrhagiae serovar Lai (strain 56601)).